The following is a 1025-amino-acid chain: Transcription factor tau 131 kDa subunit (1025 aa).

The segment covering 1-26 (MAAGKLKKEQQNQSAERESADTGKVN) has biased composition (basic and acidic residues). The interval 1–71 (MAAGKLKKEQ…EDEYNSERDS (71 aa)) is disordered. Acidic residues predominate over residues 46 to 65 (DEEYDDEDVPHDLQLSEDEY). TPR repeat units lie at residues 128-161 (VAQL…DARN), 162-195 (FAAY…NASD), 196-229 (WEFW…NPME), 230-263 (WESI…NPYD), and 264-297 (ANIL…NVER). The tract at residues 128 to 569 (VAQLLSQANE…VDVVEMRKHQ (442 aa)) is sufficient to bind BDP1. Residues 309-334 (LDSSDEESAAEGEDADEKEPLEQDED) form a disordered region. Position 311 is a phosphoserine (serine 311). A compositionally biased stretch (acidic residues) spans 311-325 (SSDEESAAEGEDADE). 6 TPR repeats span residues 432-465 (IDIR…TFSD), 467-501 (ADLY…EWRT), 502-535 (TDVF…EPDD), 536-569 (LDIR…RKHQ), 875-908 (PYLY…IPDD), and 959-992 (QEAD…YDDG).

In terms of assembly, component of the TFIIIC complex composed of TFC1, TFC3, TFC4, TFC6, TFC7 and TFC8. The subunits are organized in two globular domains, tauA and tauB, connected by a proteolysis-sensitive and flexible linker. Interacts with TFC1, TFC3, TFC6, TFIIIB subunits BRF1 and BDP1, and with RNA polymerase III subunit RPC10. In terms of processing, phosphorylated.

It is found in the nucleus. In terms of biological role, TFIIIC mediates tRNA and 5S RNA gene activation by binding to intragenic promoter elements. Upstream of the transcription start site, TFIIIC assembles the initiation complex TFIIIB-TFIIIC-tDNA, which is sufficient for RNA polymerase III recruitment and function. Part of the tauA domain of TFIIIC that binds boxA DNA promoter sites of tRNA and similar genes. TFC4 is the TFIIIB-assembling subunit of TFIIIC and essential for viability. The chain is Transcription factor tau 131 kDa subunit (TFC4) from Saccharomyces cerevisiae (strain ATCC 204508 / S288c) (Baker's yeast).